The primary structure comprises 906 residues: uncharacterized protein (906 aa).

Disordered regions lie at residues lysine 231–isoleucine 322 and alanine 865–glutamate 906. Residues threonine 236–threonine 250 are compositionally biased toward low complexity. Pro residues predominate over residues threonine 264–alanine 281. Over residues serine 302 to glutamate 314 the composition is skewed to polar residues. Residues alanine 867–glutamate 906 are compositionally biased toward acidic residues.

This is an uncharacterized protein from Dictyostelium sp. (strain GA11) (Slime mold).